The sequence spans 538 residues: Aldehyde dehydrogenase family 2 member B4, mitochondrial (538 aa).

A mitochondrion-targeting transit peptide spans Met-1–Phe-38. Residue Gly-282–Gly-287 participates in NAD(+) binding. The active-site Proton acceptor is Glu-305. Catalysis depends on Cys-339, which acts as the Nucleophile.

The protein belongs to the aldehyde dehydrogenase family. In terms of assembly, homotetramer.

The protein resides in the mitochondrion matrix. It carries out the reaction an aldehyde + NAD(+) + H2O = a carboxylate + NADH + 2 H(+). Its function is as follows. Possesses activity on acetaldehyde and glycolaldehyde in vitro. In Arabidopsis thaliana (Mouse-ear cress), this protein is Aldehyde dehydrogenase family 2 member B4, mitochondrial (ALDH2B4).